Here is a 141-residue protein sequence, read N- to C-terminus: Hemoglobin subunit alpha-1 (141 aa).

Residues 1-141 form the Globin domain; that stretch reads VLSEGNKKAI…VTYQLSSLYR (141 aa). Position 59 (His-59) interacts with O2. Residue His-88 coordinates heme b.

The protein belongs to the globin family. Heterotetramer of two alpha chains and two beta chains. As to expression, red blood cells.

Functionally, involved in oxygen transport from the lung to the various peripheral tissues. This Torpedo marmorata (Marbled electric ray) protein is Hemoglobin subunit alpha-1.